The chain runs to 146 residues: Large ribosomal subunit protein uL15 (146 aa).

The interval 1–64 (MQLNTIKPAI…MPMHRRLPKR (64 aa)) is disordered. Positions 30 to 39 (TATKGHKGQK) are enriched in basic residues.

This sequence belongs to the universal ribosomal protein uL15 family. In terms of assembly, part of the 50S ribosomal subunit.

Its function is as follows. Binds to the 23S rRNA. In Geobacter sp. (strain M21), this protein is Large ribosomal subunit protein uL15.